A 117-amino-acid chain; its full sequence is Cysteine rich necrotrophic effector Tox1 (117 aa).

An N-terminal signal peptide occupies residues 1–17 (MKLTMVLSVAFATLTFA). 8 cysteine pairs are disulfide-bonded: Cys36-Cys87, Cys44-Cys55, Cys53-Cys58, Cys54-Cys98, Cys63-Cys83, Cys67-Cys117, Cys86-Cys97, and Cys107-Cys110. The tract at residues 87-117 (CNAGGESHELCCSIASAGIDCNPCTAGLRMC) is chitin-binding domain.

Interacts with host cell wall-associated kinase receptor Snn1.

The protein resides in the secreted. In terms of biological role, necrotrophic effector that plays a critical role during fungal penetration, via its interaction with the host Snn1 protein. Snn1 is a member of the wall-associated kinase class of receptors, which are known to drive pathways for biotrophic pathogen resistance. Recognition of Tox1 by Snn1 induces mitogen-activated protein kinase genes such as MAPK3 and activates programmed cell death, which allows this necrotroph to gain nutrients and sporulate. Recognition of Tox1 by Snn1 also induces other plant defense responses, including oxidative burst and pathogenesis related (PR) gene expression. The development of necrosis and disease induced by Tox1, and particularly penetration during infection, requires light, which is probably related to the light-dependent expression of host Snn1. Tox1 plays an additional role in providing significant protection from wheat chitinases by binding chitin in the fungal cell wall. The chain is Cysteine rich necrotrophic effector Tox1 from Phaeosphaeria nodorum (strain SN15 / ATCC MYA-4574 / FGSC 10173) (Glume blotch fungus).